The sequence spans 226 residues: tRNA (guanine-N(7)-)-methyltransferase (226 aa).

Residues 1 to 22 (MTTPQQPHGPLRSFGRLKSRPV) form a disordered region. S-adenosyl-L-methionine contacts are provided by Glu59, Glu84, Asp111, and Asp133. The active site involves Asp133. A substrate-binding site is contributed by Lys137. Residues 139–144 (RHNKRR) form an interaction with RNA region. Substrate is bound by residues Asp169 and 206–209 (TRYE).

Belongs to the class I-like SAM-binding methyltransferase superfamily. TrmB family.

The catalysed reaction is guanosine(46) in tRNA + S-adenosyl-L-methionine = N(7)-methylguanosine(46) in tRNA + S-adenosyl-L-homocysteine. The protein operates within tRNA modification; N(7)-methylguanine-tRNA biosynthesis. In terms of biological role, catalyzes the formation of N(7)-methylguanine at position 46 (m7G46) in tRNA. This Caulobacter vibrioides (strain ATCC 19089 / CIP 103742 / CB 15) (Caulobacter crescentus) protein is tRNA (guanine-N(7)-)-methyltransferase.